We begin with the raw amino-acid sequence, 124 residues long: Large ribosomal subunit protein bL19 (124 aa).

It belongs to the bacterial ribosomal protein bL19 family.

Its function is as follows. This protein is located at the 30S-50S ribosomal subunit interface and may play a role in the structure and function of the aminoacyl-tRNA binding site. This is Large ribosomal subunit protein bL19 from Dinoroseobacter shibae (strain DSM 16493 / NCIMB 14021 / DFL 12).